A 224-amino-acid chain; its full sequence is Ribose-5-phosphate isomerase A (224 aa).

Substrate-binding positions include 34–37 (TGST), 87–90 (DGAD), and 100–103 (KGGG). Glu-109 serves as the catalytic Proton acceptor. Lys-127 serves as a coordination point for substrate.

Belongs to the ribose 5-phosphate isomerase family. In terms of assembly, homodimer.

The catalysed reaction is aldehydo-D-ribose 5-phosphate = D-ribulose 5-phosphate. Its pathway is carbohydrate degradation; pentose phosphate pathway; D-ribose 5-phosphate from D-ribulose 5-phosphate (non-oxidative stage): step 1/1. Functionally, catalyzes the reversible conversion of ribose-5-phosphate to ribulose 5-phosphate. The polypeptide is Ribose-5-phosphate isomerase A (Francisella tularensis subsp. novicida (strain U112)).